We begin with the raw amino-acid sequence, 444 residues long: Glutamate--tRNA ligase 1 (444 aa).

The 'HIGH' region motif lies at 8 to 18 (PSPTGFLHVGN). The 'KMSKS' region signature appears at 239–243 (KISKR). Lys-242 serves as a coordination point for ATP.

It belongs to the class-I aminoacyl-tRNA synthetase family. Glutamate--tRNA ligase type 1 subfamily. In terms of assembly, monomer.

Its subcellular location is the cytoplasm. The enzyme catalyses tRNA(Glu) + L-glutamate + ATP = L-glutamyl-tRNA(Glu) + AMP + diphosphate. Catalyzes the attachment of glutamate to tRNA(Glu) in a two-step reaction: glutamate is first activated by ATP to form Glu-AMP and then transferred to the acceptor end of tRNA(Glu). The sequence is that of Glutamate--tRNA ligase 1 from Zymomonas mobilis subsp. mobilis (strain ATCC 31821 / ZM4 / CP4).